The chain runs to 471 residues: Thymidine phosphorylase (471 aa).

The span at 1-10 (MAAPGTPPPS) shows a compositional bias: pro residues. Positions 1 to 21 (MAAPGTPPPSASGGGGGEPRQ) are disordered. A Phosphothreonine modification is found at threonine 6. Residues histidine 102, arginine 188, serine 203, and lysine 207 each coordinate substrate.

It belongs to the thymidine/pyrimidine-nucleoside phosphorylase family. In terms of assembly, homodimer.

It carries out the reaction thymidine + phosphate = 2-deoxy-alpha-D-ribose 1-phosphate + thymine. It participates in pyrimidine metabolism; dTMP biosynthesis via salvage pathway; dTMP from thymine: step 1/2. Its function is as follows. Catalyzes the reversible phosphorolysis of thymidine. The produced molecules are then utilized as carbon and energy sources or in the rescue of pyrimidine bases for nucleotide synthesis. The sequence is that of Thymidine phosphorylase (Tymp) from Mus musculus (Mouse).